Reading from the N-terminus, the 138-residue chain is Transcription antitermination protein NusB (138 aa).

The protein belongs to the NusB family.

In terms of biological role, involved in transcription antitermination. Required for transcription of ribosomal RNA (rRNA) genes. Binds specifically to the boxA antiterminator sequence of the ribosomal RNA (rrn) operons. The protein is Transcription antitermination protein NusB of Helicobacter pylori (strain ATCC 700392 / 26695) (Campylobacter pylori).